The following is a 180-amino-acid chain: Adenine phosphoribosyltransferase (180 aa).

An N-acetylserine modification is found at Ser2. Phosphoserine is present on residues Ser15 and Ser30. Residue Tyr60 is modified to Phosphotyrosine. The residue at position 66 (Ser66) is a Phosphoserine. Lys114 is modified (N6-acetyllysine). Thr135 is subject to Phosphothreonine.

The protein belongs to the purine/pyrimidine phosphoribosyltransferase family. As to quaternary structure, homodimer.

The protein localises to the cytoplasm. The catalysed reaction is AMP + diphosphate = 5-phospho-alpha-D-ribose 1-diphosphate + adenine. It participates in purine metabolism; AMP biosynthesis via salvage pathway; AMP from adenine: step 1/1. Catalyzes a salvage reaction resulting in the formation of AMP, that is energically less costly than de novo synthesis. This Mus musculus (Mouse) protein is Adenine phosphoribosyltransferase.